The following is a 24-amino-acid chain: Humanin-like 10 (24 aa).

Belongs to the humanin family. Expressed in mature brain, thyroid gland and testis.

The protein resides in the secreted. The protein localises to the cytoplasm. Its function is as follows. Plays a role as a neuroprotective and antiapoptotic factor. In Homo sapiens (Human), this protein is Humanin-like 10.